A 304-amino-acid polypeptide reads, in one-letter code: MRLPIFLDTDPGIDDAVAIAAAIFAPELDLQLMTTVAGNVSVEKTTRNALQLLHFWNAEIPLAQGAAVPLVRAPRDAASVHGESGMAGYDFVEHNRKPLGIPAFLAIRDALMRAPEPVTLVAIGPLTNIALLLLQCPECKPYIRRLVIMGGSAGRGNCTPNAEFNIAADPEAAACVFRSGIEIVMCGLDVTNQAILTPDYLATLPELNRTGKMLHALFSHYRSGSMQSGLRMHDLCAIAWLVRPDLFTLKPCFVAVETQGEFTSGTTVVDIDGCLGKPANVQVALDLNVKGFQQWVAEVLALVP.

Histidine 233 is an active-site residue.

It belongs to the IUNH family. RihC subfamily.

Functionally, hydrolyzes both purine and pyrimidine ribonucleosides with a broad-substrate specificity. In Shigella flexneri serotype 5b (strain 8401), this protein is Non-specific ribonucleoside hydrolase RihC.